Consider the following 131-residue polypeptide: Leptin receptor overlapping transcript-like 1 (131 aa).

A run of 4 helical transmembrane segments spans residues 7–27 (LISLSFGGAIGLMFLMLGCAL), 32–52 (KYWPLFVLFFYILSPIPYCIA), 69–89 (LAIFLTTGIVVSAFGLPIVFA), and 100–120 (ALVLTGNTVIFATILGFFLVF).

Belongs to the OB-RGRP/VPS55 family. In terms of assembly, interacts with RAB13. In terms of tissue distribution, widely expressed, with highest expression in heart, testis, adrenal gland, thymus, and spleen, and lowest expression in lung and skeletal muscle.

The protein localises to the membrane. Functionally, negatively regulates growth hormone (GH) receptor cell surface expression in liver. May play a role in liver resistance to GH during periods of reduced nutrient availability. In Homo sapiens (Human), this protein is Leptin receptor overlapping transcript-like 1 (LEPROTL1).